Consider the following 178-residue polypeptide: Large ribosomal subunit protein bL25 (178 aa).

Belongs to the bacterial ribosomal protein bL25 family. CTC subfamily. In terms of assembly, part of the 50S ribosomal subunit; part of the 5S rRNA/L5/L18/L25 subcomplex. Contacts the 5S rRNA. Binds to the 5S rRNA independently of L5 and L18.

In terms of biological role, this is one of the proteins that binds to the 5S RNA in the ribosome where it forms part of the central protuberance. In Wolinella succinogenes (strain ATCC 29543 / DSM 1740 / CCUG 13145 / JCM 31913 / LMG 7466 / NCTC 11488 / FDC 602W) (Vibrio succinogenes), this protein is Large ribosomal subunit protein bL25.